A 165-amino-acid chain; its full sequence is MIKIIGLDPGMSKTGWAIIRLEEKNNIKFLGGGTISTDGKLGVGERLHIIFEQLKKVIFLYSPNEAAVEKIFINKNPKSSLTLGYARAIAILILRMTDLPMNEYDANYIKKSITGNGHADKGQIIFMVKQIVKSSNIKCHHTADALATAICHAYTKNFCFMGIGS.

Residues aspartate 8, glutamate 69, and histidine 141 contribute to the active site. Residues aspartate 8, glutamate 69, and histidine 141 each contribute to the Mg(2+) site.

The protein belongs to the RuvC family. As to quaternary structure, homodimer which binds Holliday junction (HJ) DNA. The HJ becomes 2-fold symmetrical on binding to RuvC with unstacked arms; it has a different conformation from HJ DNA in complex with RuvA. In the full resolvosome a probable DNA-RuvA(4)-RuvB(12)-RuvC(2) complex forms which resolves the HJ. Mg(2+) is required as a cofactor.

It localises to the cytoplasm. The enzyme catalyses Endonucleolytic cleavage at a junction such as a reciprocal single-stranded crossover between two homologous DNA duplexes (Holliday junction).. The RuvA-RuvB-RuvC complex processes Holliday junction (HJ) DNA during genetic recombination and DNA repair. Endonuclease that resolves HJ intermediates. Cleaves cruciform DNA by making single-stranded nicks across the HJ at symmetrical positions within the homologous arms, yielding a 5'-phosphate and a 3'-hydroxyl group; requires a central core of homology in the junction. The consensus cleavage sequence is 5'-(A/T)TT(C/G)-3'. Cleavage occurs on the 3'-side of the TT dinucleotide at the point of strand exchange. HJ branch migration catalyzed by RuvA-RuvB allows RuvC to scan DNA until it finds its consensus sequence, where it cleaves and resolves the cruciform DNA. The polypeptide is Crossover junction endodeoxyribonuclease RuvC (Wolbachia pipientis subsp. Culex pipiens (strain wPip)).